Consider the following 256-residue polypeptide: Thiazole synthase (256 aa).

Catalysis depends on Lys-95, which acts as the Schiff-base intermediate with DXP. Residues Gly-156, 182–183 (AG), and 204–205 (NT) contribute to the 1-deoxy-D-xylulose 5-phosphate site.

It belongs to the ThiG family. In terms of assembly, homotetramer. Forms heterodimers with either ThiH or ThiS.

The protein resides in the cytoplasm. It carries out the reaction [ThiS sulfur-carrier protein]-C-terminal-Gly-aminoethanethioate + 2-iminoacetate + 1-deoxy-D-xylulose 5-phosphate = [ThiS sulfur-carrier protein]-C-terminal Gly-Gly + 2-[(2R,5Z)-2-carboxy-4-methylthiazol-5(2H)-ylidene]ethyl phosphate + 2 H2O + H(+). It participates in cofactor biosynthesis; thiamine diphosphate biosynthesis. Functionally, catalyzes the rearrangement of 1-deoxy-D-xylulose 5-phosphate (DXP) to produce the thiazole phosphate moiety of thiamine. Sulfur is provided by the thiocarboxylate moiety of the carrier protein ThiS. In vitro, sulfur can be provided by H(2)S. This is Thiazole synthase from Klebsiella pneumoniae subsp. pneumoniae (strain ATCC 700721 / MGH 78578).